A 524-amino-acid chain; its full sequence is Zinc finger protein GLIS2 (524 aa).

Positions 35 to 174 are interaction with CTNND1; sequence ALHRELGLVD…PKQLVCRWAK (140 aa). Disordered stretches follow at residues 39–62 and 84–114; these read ELGL…FLLN and SPPS…VPSA. The tract at residues 71–137 is transcription activation; it reads GRFSAAPLVD…SSFQFFLPLG (67 aa). Positions 84-100 are enriched in low complexity; sequence SPPSGLDSPNGSSSLSP. Positions 148–171 are transcription repression; it reads SFLTPPKDKCLSPDLPLPKQLVCR. The C2H2-type 1 zinc finger occupies 168–193; the sequence is LVCRWAKCNQLFELLQDLVDHVNDYH. The segment at 202 to 229 adopts a C2H2-type 2; atypical zinc-finger fold; that stretch reads YCCHWEGCARHGRGFNARYKMLIHIRTH. C2H2-type zinc fingers lie at residues 235-257, 263-287, and 293-317; these read HRCP…NRSH, YVCP…TRTH, and YYCK…IKAH. Residues 439-480 form a disordered region; the sequence is GGKAEGEKGRGSVPTRALGMEGHKTPLERTESSCSRPSPDGL. A compositionally biased stretch (basic and acidic residues) spans 459–469; it reads EGHKTPLERTE.

This sequence belongs to the GLI C2H2-type zinc-finger protein family. As to quaternary structure, interacts with CTBP1 and HDAC3. Interacts with CTNNB1. Interacts with SUFU. Interacts with CTNND1. In terms of processing, C-terminus cleavage is induced by interaction with CTNND1 and enhanced by Src tyrosine kinase. As to expression, expressed at high levels in kidney and at low levels in heart, lung and placenta. Expressed in colon.

The protein localises to the nucleus speckle. It localises to the cytoplasm. Can act either as a transcriptional repressor or as a transcriptional activator, depending on the cell context. Acts as a repressor of the Hedgehog signaling pathway. Represses the Hedgehog-dependent expression of Wnt4. Necessary to maintain the differentiated epithelial phenotype in renal cells through the inhibition of SNAI1, which itself induces the epithelial-to-mesenchymal transition. Represses transcriptional activation mediated by CTNNB1 in the Wnt signaling pathway. May act by recruiting the corepressors CTBP1 and HDAC3. May be involved in neuron differentiation. This Homo sapiens (Human) protein is Zinc finger protein GLIS2 (GLIS2).